The sequence spans 29 residues: Bacteriocin (29 aa).

It is found in the secreted. In terms of biological role, has antibacterial activity against strains of L.monocytogenes, L.lactis, B.subtilis, S.typhi, S.aureus, C.perfringens, E.aerogenes and M.luteus but not against E.coli, S.sonnei, S.pneumoniae, S.faecalis, P.aeruginosa, K.pneumoniae or P.vulgaris. The protein is Bacteriocin of Lactococcus lactis subsp. lactis (Streptococcus lactis).